A 238-amino-acid chain; its full sequence is Green fluorescent protein (238 aa).

A cross-link (5-imidazolinone (Ser-Gly)) is located at residues 65 to 67; sequence SYG. Y66 is modified ((Z)-2,3-didehydrotyrosine).

This sequence belongs to the GFP family. As to quaternary structure, monomer. Post-translationally, contains a chromophore consisting of modified amino acid residues. The chromophore is formed by autocatalytic backbone condensation between Ser-65 and Gly-67, and oxidation of Tyr-66 to didehydrotyrosine. Maturation of the chromophore requires nothing other than molecular oxygen. Photocytes.

Energy-transfer acceptor. Its role is to transduce the blue chemiluminescence of the protein aequorin into green fluorescent light by energy transfer. Fluoresces in vivo upon receiving energy from the Ca(2+)-activated photoprotein aequorin. This Aequorea victoria (Water jellyfish) protein is Green fluorescent protein (GFP).